The chain runs to 224 residues: uncharacterized protein (224 aa).

Residues Q108–E137 adopt a coiled-coil conformation.

This is an uncharacterized protein from Human picobirnavirus (strain Human/Thailand/Hy005102/-) (PBV).